A 71-amino-acid chain; its full sequence is Small integral membrane protein 31 (71 aa).

The chain crosses the membrane as a helical span at residues 8-28 (LEVAFILLAFFIFSLFTLASI). The span at 48–57 (RKRKEFKGKK) shows a compositional bias: basic residues. Residues 48-71 (RKRKEFKGKKNCSDEEHKIETMQP) form a disordered region. Residue N58 is glycosylated (N-linked (GlcNAc...) asparagine). Residues 58–71 (NCSDEEHKIETMQP) are compositionally biased toward basic and acidic residues.

The protein localises to the membrane. This is Small integral membrane protein 31 from Mus musculus (Mouse).